We begin with the raw amino-acid sequence, 170 residues long: Urease accessory protein UreE (170 aa).

The interval 137–170 is disordered; the sequence is PFDPESGAYAHAGREQSHAHSHEHSHADGHTHAH. The segment covering 148 to 170 has biased composition (basic and acidic residues); it reads AGREQSHAHSHEHSHADGHTHAH.

This sequence belongs to the UreE family.

The protein resides in the cytoplasm. Its function is as follows. Involved in urease metallocenter assembly. Binds nickel. Probably functions as a nickel donor during metallocenter assembly. This is Urease accessory protein UreE from Pseudoalteromonas translucida (strain TAC 125).